A 445-amino-acid chain; its full sequence is Glucose-6-phosphate isomerase (445 aa).

The active-site Proton donor is the glutamate 287. Active-site residues include histidine 308 and lysine 422.

The protein belongs to the GPI family.

Its subcellular location is the cytoplasm. It carries out the reaction alpha-D-glucose 6-phosphate = beta-D-fructose 6-phosphate. It functions in the pathway carbohydrate biosynthesis; gluconeogenesis. The protein operates within carbohydrate degradation; glycolysis; D-glyceraldehyde 3-phosphate and glycerone phosphate from D-glucose: step 2/4. Functionally, catalyzes the reversible isomerization of glucose-6-phosphate to fructose-6-phosphate. In Bacteroides thetaiotaomicron (strain ATCC 29148 / DSM 2079 / JCM 5827 / CCUG 10774 / NCTC 10582 / VPI-5482 / E50), this protein is Glucose-6-phosphate isomerase.